Reading from the N-terminus, the 2377-residue chain is Serine/threonine-protein kinase WNK1 (2377 aa).

2 disordered regions span residues 1-79 (MSDG…RFFR) and 93-203 (LPGL…QQDD). 2 positions are modified to phosphothreonine: Thr-17 and Thr-58. A compositionally biased stretch (basic and acidic residues) spans 48–64 (RTEEYRRRRHTMDKDSR). 2 stretches are compositionally biased toward low complexity: residues 101 to 111 (PQPSVPAVVPQ) and 127 to 141 (VASQ…AASP). The segment covering 149–158 (SATTTVPSST) has biased composition (polar residues). A phosphoserine mark is found at Ser-165 and Ser-172. One can recognise a Protein kinase domain in the interval 221–479 (LKFDIEIGRG…IKDLLNHAFF (259 aa)). ATP is bound at residue Ser-231. Positions 283 and 299 each coordinate chloride. Residues 301–304 (TELM) and Lys-351 contribute to the ATP site. Asp-368 (proton acceptor) is an active-site residue. Residues Leu-369 and Leu-371 each contribute to the chloride site. Ser-378 and Ser-382 each carry phosphoserine; by autocatalysis. The tract at residues 488-555 (ELAEEDDGEK…VCEGDHKTMA (68 aa)) is autoinhibitory domain. Positions 573-588 (QLVREEQEKRKQEESS) are enriched in basic and acidic residues. 2 disordered regions span residues 573–782 (QLVR…SAGT) and 1013–1114 (PAVS…SRPK). Polar residues-rich tracts occupy residues 593-628 (NEQQ…STQV), 638-705 (HQQL…QSQP), and 713-733 (SMAQ…VLSS). The interaction with KLHL3 stretch occupies residues 629-639 (EPEEPEADQHQ). Residues 734-746 (QPIQHPQQQGIQP) are compositionally biased toward low complexity. The span at 747–782 (TVPSQQAVQYSLPQAASSSEGTTAQPVSQPQVSAGT) shows a compositional bias: polar residues. Low complexity predominate over residues 1018–1028 (TQQPPTTSSQQ). Residues 1029-1038 (AVLESTQGVS) are compositionally biased toward polar residues. Over residues 1042–1058 (PPEQTPITQSQPTQPVP) the composition is skewed to low complexity. Positions 1075–1085 (SDGNENAPSSS) are enriched in polar residues. Over residues 1093–1114 (TKRHYRKSVRSRSRHEKTSRPK) the composition is skewed to basic residues. The RFXV motif 1 motif lies at 1252 to 1255 (RFIV). Ser-1256 carries the post-translational modification Phosphoserine. Disordered stretches follow at residues 1726–1760 (GQVS…TVVP) and 1818–1847 (TMSS…SSGA). Over residues 1738–1748 (PVGTATGVKPG) the composition is skewed to low complexity. Residue Thr-1843 is modified to Phosphothreonine. Residues 1854-1857 (RFQV) carry the RFXV motif 2 motif. Residues 1860–1945 (TMDDAQKERK…TKVGRFQVTT (86 aa)) form a disordered region. A compositionally biased stretch (basic and acidic residues) spans 1863-1879 (DAQKERKNRSEDTKSVH). Residues 1882-1900 (SSTSESSVLSSSSPESTLV) are compositionally biased toward low complexity. 2 consecutive short sequence motifs (RFXV motif) follow at residues 1940 to 1943 (RFQV) and 1952 to 1955 (RFSV). Over residues 1959 to 1969 (EDKVTELKKEG) the composition is skewed to basic and acidic residues. 5 disordered regions span residues 1959 to 1984 (EDKV…QTVI), 1989 to 2008 (PKKE…PSSD), 2015 to 2064 (SRGT…DIED), 2107 to 2191 (VIIP…NLYS), and 2203 to 2239 (SLSA…SRKG). Ser-1973 is modified (phosphoserine). Over residues 1989–1998 (PKKEKPELAE) the composition is skewed to basic and acidic residues. Residues Ser-2006, Ser-2007, Ser-2022, Ser-2024, and Ser-2027 each carry the phosphoserine modification. A compositionally biased stretch (low complexity) spans 2035-2057 (SLPVQNLSQSLSNSFNSSYMSSD). Ser-2116 carries the phosphoserine modification. Positions 2117–2129 (GRRRRPTKSKGSK) are enriched in basic residues. Low complexity predominate over residues 2130–2140 (SSRSSSLGNKS). The segment covering 2141-2191 (PQLSGNLSGQSGTSVLHPQQTLHPAGNTPETGHNQLLQPLKPSPSSDNLYS) has biased composition (polar residues). Low complexity predominate over residues 2208 to 2232 (GQGTSSTNTVGGTVSSQAAQAQPPA). The interval 2236-2256 (SRKGTFTDDLHKLVDNWARDA) is amphipathic alpha-helix. Residues Ser-2265 and Ser-2281 each carry the phosphoserine modification. The tract at residues 2325 to 2344 (PAPFGTQWSGTGGPAPQPLG) is disordered. Ser-2365 and Ser-2367 each carry phosphoserine.

The protein belongs to the protein kinase superfamily. Ser/Thr protein kinase family. WNK subfamily. In terms of assembly, interacts with WNK3. Interacts with WNK4; inhibiting the activity of WNK4. Interacts with SGK1; promoting its activation. Associates with the mTORC2 complex. Interacts with UVRAG. As to quaternary structure, interacts with isoform 1; inhibiting isoform 1 activity. Mg(2+) is required as a cofactor. Post-translationally, autophosphorylated at Ser-378 and Ser-382, promoting its activity. Autophosphorylation at Ser-382 is inhibited by intracellular calcium. Phosphorylation at Thr-58 increases ability to activate SGK1. Ubiquitinated by the BCR(KLHL3) complex, leading to its degradation. Also ubiquitinated by the BCR(KLHL2) complex. In terms of processing, may be O-glycosylated. In terms of tissue distribution, widely expressed in both adult and embryonic tissue, with highest levels observed in the testis and lower levels in heart, lung, kidney, placenta, brain and skeletal muscle. Expressed in pancreatic duct. Two isoforms are expressed in heart, a single shorter isoform in the kidney. Locates to the distal convoluted tubule, the medullary collecting duct and the cortical collecting duct of the kidney. Restricted to the nervous system, expressed preferentially in sensory neurons than in motor neurons and in general more abundant in axons than in cell bodies (at protein level). In the DRG, predominantly expressed in the satellite cells that envelop sensory neurons, but low expression also observed in the cell bodies of neurons (at protein level). In the sciatic nerve, expressed in the Schwann cells that surround axons and in a mosaic distribution of axons (at protein level). In the spinal cord, expressed in superficial layers (LI and LII), as well as in the fibers of the Lissauer tract (at protein level). Also detected in the axon fibers of dorsolateral funiculus and lateral funiculus (at protein level).

The protein resides in the cytoplasm. It is found in the nucleus. Its subcellular location is the cytoskeleton. It localises to the spindle. It catalyses the reaction L-seryl-[protein] + ATP = O-phospho-L-seryl-[protein] + ADP + H(+). The catalysed reaction is L-threonyl-[protein] + ATP = O-phospho-L-threonyl-[protein] + ADP + H(+). Its activity is regulated as follows. Activated in response to hyperosmotic stress: cell shrinkage promotes formation of a membraneless compartment that concentrates WNK1 with its substrates, OXSR1/OSR1 and STK39/SPAK. Activation requires autophosphorylation of Ser-382 and, to a lower extent, Ser-378. Autophosphorylation and subsequent activation is inhibited by increases in intracellular ionic strength: Cl(-) potently inhibits WNK1 kinase activity via direct binding. Also inhibited by K(+) ions. In terms of biological role, serine/threonine-protein kinase component of the WNK1-SPAK/OSR1 kinase cascade, which acts as a key regulator of blood pressure and regulatory volume increase by promoting ion influx. WNK1 mediates regulatory volume increase in response to hyperosmotic stress by acting as a molecular crowding sensor, which senses cell shrinkage and mediates formation of a membraneless compartment by undergoing liquid-liquid phase separation. The membraneless compartment concentrates WNK1 with its substrates, OXSR1/OSR1 and STK39/SPAK, promoting WNK1-dependent phosphorylation and activation of downstream kinases OXSR1/OSR1 and STK39/SPAK. Following activation, OXSR1/OSR1 and STK39/SPAK catalyze phosphorylation of ion cotransporters SLC12A1/NKCC2, SLC12A2/NKCC1, SLC12A5/KCC2 and SLC12A6/KCC3, regulating their activity. Phosphorylation of Na-K-Cl cotransporters SLC12A2/NKCC1 and SLC12A2/NKCC1 promote their activation and ion influx; simultaneously, phosphorylation of K-Cl cotransporters SLC12A5/KCC2 and SLC12A6/KCC3 inhibit their activity, blocking ion efflux. Also acts as a regulator of angiogenesis in endothelial cells. Also acts independently of the WNK1-SPAK/OSR1 kinase cascade by catalyzing phosphorylation of other substrates, such as SYT2, PCF11 and NEDD4L. Mediates phosphorylation of SYT2, regulating SYT2 association with phospholipids and membrane-binding. Regulates mRNA export in the nucleus by mediating phosphorylation of PCF11, thereby decreasing the association between PCF11 and POLR2A/RNA polymerase II and promoting mRNA export to the cytoplasm. Acts as a negative regulator of autophagy. Required for the abscission step during mitosis, independently of the WNK1-SPAK/OSR1 kinase cascade. WNK1 may also play a role in actin cytoskeletal reorganization. Also acts as a scaffold protein independently of its protein kinase activity: negatively regulates cell membrane localization of various transporters and channels, such as SLC4A4, SLC26A6, SLC26A9, TRPV4 and CFTR. Involved in the regulation of epithelial Na(+) channel (ENaC) by promoting activation of SGK1 in a kinase-independent manner: probably acts as a scaffold protein that promotes the recruitment of SGK1 to the mTORC2 complex in response to chloride, leading to mTORC2-dependent phosphorylation and activation of SGK1. Acts as an assembly factor for the ER membrane protein complex independently of its protein kinase activity: associates with EMC2 in the cytoplasm via its amphipathic alpha-helix, and prevents EMC2 ubiquitination and subsequent degradation, thereby promoting EMC2 stabilization. Its function is as follows. Kinase-defective isoform specifically expressed in kidney, which acts as a dominant-negative regulator of the longer isoform 1. Does not directly inhibit WNK4 and has no direct effect on sodium and chloride ion transport. Down-regulates sodium-chloride cotransporter activity indirectly by inhibiting isoform 1, it associates with isoform 1 and attenuates its kinase activity. In kidney, may play an important role regulating sodium and potassium balance. The polypeptide is Serine/threonine-protein kinase WNK1 (Mus musculus (Mouse)).